Reading from the N-terminus, the 197-residue chain is Imidazoleglycerol-phosphate dehydratase (197 aa).

Belongs to the imidazoleglycerol-phosphate dehydratase family.

It is found in the cytoplasm. It carries out the reaction D-erythro-1-(imidazol-4-yl)glycerol 3-phosphate = 3-(imidazol-4-yl)-2-oxopropyl phosphate + H2O. It functions in the pathway amino-acid biosynthesis; L-histidine biosynthesis; L-histidine from 5-phospho-alpha-D-ribose 1-diphosphate: step 6/9. This Pseudomonas fluorescens (strain SBW25) protein is Imidazoleglycerol-phosphate dehydratase.